Here is a 170-residue protein sequence, read N- to C-terminus: Crossover junction endodeoxyribonuclease RuvC (170 aa).

Catalysis depends on residues D11, E71, and D143. Mg(2+)-binding residues include D11, E71, and D143.

The protein belongs to the RuvC family. In terms of assembly, homodimer which binds Holliday junction (HJ) DNA. The HJ becomes 2-fold symmetrical on binding to RuvC with unstacked arms; it has a different conformation from HJ DNA in complex with RuvA. In the full resolvosome a probable DNA-RuvA(4)-RuvB(12)-RuvC(2) complex forms which resolves the HJ. Mg(2+) is required as a cofactor.

The protein localises to the cytoplasm. The catalysed reaction is Endonucleolytic cleavage at a junction such as a reciprocal single-stranded crossover between two homologous DNA duplexes (Holliday junction).. The RuvA-RuvB-RuvC complex processes Holliday junction (HJ) DNA during genetic recombination and DNA repair. Endonuclease that resolves HJ intermediates. Cleaves cruciform DNA by making single-stranded nicks across the HJ at symmetrical positions within the homologous arms, yielding a 5'-phosphate and a 3'-hydroxyl group; requires a central core of homology in the junction. The consensus cleavage sequence is 5'-(A/T)TT(C/G)-3'. Cleavage occurs on the 3'-side of the TT dinucleotide at the point of strand exchange. HJ branch migration catalyzed by RuvA-RuvB allows RuvC to scan DNA until it finds its consensus sequence, where it cleaves and resolves the cruciform DNA. In Sinorhizobium fredii (strain NBRC 101917 / NGR234), this protein is Crossover junction endodeoxyribonuclease RuvC.